Consider the following 221-residue polypeptide: MNVRIDQSWKNKLDNEFEKEYFENLITYIKDEYSEHKCFPPGNEIFAAFDYSSFEDTKVVILGQDPYHGIGQANGLCFSVKDGVAFPPSLINIFKEIESDLNKPIPSTGNLERWANQGVLLLNATLSVRAHQAGSHQNKGWETFTDQVIRIVSETKENVVFLLWGGYAKKKTKLIDNSKHLILTSGHPSPLSANRGYWFGNKHFSKTNEYLKSQGEQPIEW.

Asp65 functions as the Proton acceptor in the catalytic mechanism.

The protein belongs to the uracil-DNA glycosylase (UDG) superfamily. UNG family.

It is found in the cytoplasm. The enzyme catalyses Hydrolyzes single-stranded DNA or mismatched double-stranded DNA and polynucleotides, releasing free uracil.. Functionally, excises uracil residues from the DNA which can arise as a result of misincorporation of dUMP residues by DNA polymerase or due to deamination of cytosine. This Christiangramia forsetii (strain DSM 17595 / CGMCC 1.15422 / KT0803) (Gramella forsetii) protein is Uracil-DNA glycosylase.